A 483-amino-acid chain; its full sequence is MKTKLFINNAWIDSSDQQTFERIHPVSSDVVTESANATVTDAIKAAQAAEEAFKTWKAVGPSERRRLLLKVADVMESKTPKFIEVMAMEVGASALWAGFNVHASANVFREAASLATQIQGETIPTDKAETLSMTLRQPVGPILSIVPWNGTAVLAARAIAYPLVCGNTVVFKGSEFSPATHALITQCVQEAGLPAGVLNYLNSSPDRSPEIADALISAKEIRRINFTGSTRVGSIIAQKAAQHLKRCLLELGGKSPLIVLDDADIDAAVKAAVFGSFLFQGQICMSTERLIVDEKIADEFVAKFVEKTKRLSAGDPCVTGDCIIGPMVSPNSGERINGLFKDAIDKGAKVVCGGLAQGALMPATILDHVKSDMRIYDEETFGPITVVIRCKGEAEAVRIANDSVYGLSSGVFGRDINRALRVGMSIEYGSVHINGSTVQNEAQAPYGGTKNTGYGRFDGRAVIDEFTEIKWLTIEPFEQQYPF.

228–233 (GSTRVG) provides a ligand contact to NAD(+). Catalysis depends on residues glutamate 250 and cysteine 284.

It belongs to the aldehyde dehydrogenase family.

It catalyses the reaction salicylaldehyde + NAD(+) + H2O = salicylate + NADH + 2 H(+). Its pathway is aromatic compound metabolism; naphthalene degradation. The polypeptide is Salicylaldehyde dehydrogenase (nahF) (Pseudomonas putida (Arthrobacter siderocapsulatus)).